The chain runs to 2293 residues: Protein Ycf2 (2293 aa).

Position 1642–1649 (1642–1649 (GSIGTGRS)) interacts with ATP.

It belongs to the Ycf2 family.

It is found in the plastid. The protein localises to the chloroplast stroma. Functionally, probable ATPase of unknown function. Its presence in a non-photosynthetic plant (Epifagus virginiana) and experiments in tobacco indicate that it has an essential function which is probably not related to photosynthesis. This is Protein Ycf2 from Platanus occidentalis (Sycamore).